The chain runs to 268 residues: MGNECFLTFTTTHLSEAEQKLALYRLQLVEPPKLPLEKKTNPDKDGPDIKPNLWMWVNPNMVYPPGKLEVAVKEEDQSALSAFQPALKEEEDSCSEASEVQQPLPPCRQKRKQRRSTVPLPLAPGRRAPLENPWRLPQAISPEGRLWSRPPLHYFHLIALALRNSPPCGLSVQQIYSFTREHFPFFRTAPEAWKNTVRHNLSFRDSFEKVPASRQGGASTGPRSCLWKLTEEGHRRFSKEARTLASTQLQSIQQCMSQPGVKPFLFDL.

Residues 91 to 126 (EDSCSEASEVQQPLPPCRQKRKQRRSTVPLPLAPGR) are disordered. Residues 149-248 (RPPLHYFHLI…KEARTLASTQ (100 aa)) constitute a DNA-binding region (fork-head).

As to expression, expressed in adult germ cells (at protein level). Expressed in heart, liver, lung and embryonic brain.

Its subcellular location is the nucleus. The protein localises to the cytoplasm. The protein resides in the perinuclear region. Functionally, transcription factor which acts as both an activator and a repressor. Activates transcription of a number of genes including the heat shock chaperones HSPA1A and HSPA6 and the antioxidant NADPH-dependent reductase DHRS2 which are involved in protection against oxidative stress. Required for normal brain development. This is Forkhead box protein R1 (Foxr1) from Mus musculus (Mouse).